The following is a 700-amino-acid chain: Centrosomal protein of 63 kDa (700 aa).

An N-acetylmethionine modification is found at M1. 2 coiled-coil regions span residues 73 to 283 (KEVG…ETFI) and 343 to 533 (LQAE…MCKK). 3 positions are modified to phosphoserine: S278, K488, and L492. The interval 570 to 603 (QYKTGHHSPRGQTLDSIDPVARGPSPLSSHISPG) is disordered. The segment covering 593 to 603 (PSPLSSHISPG) has biased composition (low complexity).

It belongs to the CEP63 family. As to quaternary structure, interacts with CEP152 and CDK1; these interactions recruit both ligands to centrosomes. Interacts with CDK2, CDK5RAP2, WDR62, CEP90, KIAA0753/moonraker and CCDC14. CEP63, CDK5RAP2, CEP152, WDR62 are proposed to form a stepwise assembled complex at the centrosome forming a ring near parental centrioles. Interacts with CCDC57; the interaction is required for their location to proximal end of centrioles. Interacts with FXR1; promoting its stabilization. Post-translationally, polyubiquitinated via 'Lys-48'-linked ubiquitin, leading to its degradation. Deubiquitinated by USP36, promoting its stabilization.

It localises to the cytoplasm. The protein localises to the cytoskeleton. Its subcellular location is the microtubule organizing center. The protein resides in the centrosome. It is found in the centriole. It localises to the centriolar satellite. Functionally, required for normal spindle assembly. Plays a key role in mother-centriole-dependent centriole duplication; the function also seems to involve CEP152, CDK5RAP2 and WDR62 through a stepwise assembled complex at the centrosome that recruits CDK2 required for centriole duplication. Reported to be required for centrosomal recruitment of CEP152; however, this function has been questioned. Also recruits CDK1 to centrosomes. Plays a role in DNA damage response. Following DNA damage, such as double-strand breaks (DSBs), is removed from centrosomes; this leads to the inactivation of spindle assembly and delay in mitotic progression. Promotes stabilization of FXR1 protein by inhibiting FXR1 ubiquitination. The polypeptide is Centrosomal protein of 63 kDa (Mus musculus (Mouse)).